A 518-amino-acid polypeptide reads, in one-letter code: Serine--tRNA ligase, mitochondrial (518 aa).

The transit peptide at 1–34 (MAASMARLWWPFLARQGLRSRGRCVCSQNPRRSF) directs the protein to the mitochondrion. Lysine 110 is modified (N6-acetyllysine). N6-succinyllysine is present on lysine 195. 299 to 301 (TAE) contributes to the L-serine binding site. Residue 330 to 332 (RAE) coordinates ATP. Residue lysine 337 is modified to N6-succinyllysine. Valine 345 is an ATP binding site. Residue glutamate 352 participates in L-serine binding. 418–421 (EVTS) contributes to the ATP binding site. Threonine 453 lines the L-serine pocket. The tract at residues 497–518 (PLQYIGPNQPQKPRLPGQSATR) is disordered.

This sequence belongs to the class-II aminoacyl-tRNA synthetase family. Type-1 seryl-tRNA synthetase subfamily. In terms of assembly, homodimer. The tRNA molecule probably binds across the dimer. As to expression, ubiquitous.

It localises to the mitochondrion matrix. The enzyme catalyses tRNA(Ser) + L-serine + ATP = L-seryl-tRNA(Ser) + AMP + diphosphate + H(+). It catalyses the reaction tRNA(Sec) + L-serine + ATP = L-seryl-tRNA(Sec) + AMP + diphosphate + H(+). Its pathway is aminoacyl-tRNA biosynthesis; selenocysteinyl-tRNA(Sec) biosynthesis; L-seryl-tRNA(Sec) from L-serine and tRNA(Sec): step 1/1. Catalyzes the attachment of serine to tRNA(Ser). Is also probably able to aminoacylate tRNA(Sec) with serine, to form the misacylated tRNA L-seryl-tRNA(Sec), which will be further converted into selenocysteinyl-tRNA(Sec). The chain is Serine--tRNA ligase, mitochondrial (Sars2) from Mus musculus (Mouse).